The primary structure comprises 526 residues: Reelin domain-containing protein 1 (526 aa).

An N-terminal signal peptide occupies residues 1–23; sequence MRMQAALVGWACTTLCLASCSSA. The Reelin domain maps to 24-179; the sequence is FSHGASTVAC…SAHSDDRMEP (156 aa). Topologically, residues 24–443 are extracellular; the sequence is FSHGASTVAC…PLGIQLRTPQ (420 aa). Disordered regions lie at residues 242-272, 294-336, and 370-398; these read DAET…PTLE, FASS…TVTQ, and LQTS…LPQS. Over residues 245-271 the composition is skewed to polar residues; the sequence is TLSQPSSHTATEGSINQQPSGDSNPTL. The span at 385-396 shows a compositional bias: polar residues; it reads SEASRASASFLP. The chain crosses the membrane as a helical span at residues 444-462; it reads LGILLCLSATLGMALAAGL. The Cytoplasmic portion of the chain corresponds to 463–526; that stretch reads RYLHTQYCHQ…PSVGSKKTVL (64 aa).

Its subcellular location is the membrane. The sequence is that of Reelin domain-containing protein 1 from Homo sapiens (Human).